A 315-amino-acid chain; its full sequence is Initiation factor TFIIB homolog (315 aa).

Belongs to the asfivirus C315R family.

Its function is as follows. Putative initation factor. The chain is Initiation factor TFIIB homolog from Ornithodoros (relapsing fever ticks).